Reading from the N-terminus, the 150-residue chain is Troponin C, isoform 2B (150 aa).

M1 is subject to N-acetylmethionine. 4 consecutive EF-hand domains span residues 7–42, 43–78, 83–118, and 119–150; these read EQLSALQKAFDSFDTDSKGFITPETVGVILRMMGVK, ISEKNLQEVISETDEDGSGELEFEEFVELAAKFLIE, ALKAELREAFRVYDRGGNGYITTDVLKEILRELDNR, and LTEEDLDSIIEEVDEDGSGTLDFNEFMQMMNG. Ca(2+) is bound by residues D56, D58, S60, E62, and E67. 5 residues coordinate Ca(2+): D132, D134, S136, T138, and E143.

Belongs to the troponin C family.

Troponin is the central regulatory protein of striated muscle contraction. Tn consists of three components: Tn-I which is the inhibitor of actomyosin ATPase, Tn-T which contains the binding site for tropomyosin and Tn-C. The binding of calcium to Tn-C abolishes the inhibitory action of Tn on actin filaments. The sequence is that of Troponin C, isoform 2B from Homarus americanus (American lobster).